Reading from the N-terminus, the 465-residue chain is 3-isopropylmalate dehydratase large subunit (465 aa).

Residues C347, C407, and C410 each coordinate [4Fe-4S] cluster.

This sequence belongs to the aconitase/IPM isomerase family. LeuC type 1 subfamily. As to quaternary structure, heterodimer of LeuC and LeuD. It depends on [4Fe-4S] cluster as a cofactor.

The catalysed reaction is (2R,3S)-3-isopropylmalate = (2S)-2-isopropylmalate. The protein operates within amino-acid biosynthesis; L-leucine biosynthesis; L-leucine from 3-methyl-2-oxobutanoate: step 2/4. Functionally, catalyzes the isomerization between 2-isopropylmalate and 3-isopropylmalate, via the formation of 2-isopropylmaleate. This is 3-isopropylmalate dehydratase large subunit from Buchnera aphidicola subsp. Pemphigus spyrothecae.